The chain runs to 342 residues: Prostasin (342 aa).

The first 29 residues, 1 to 29 (MAPRVGLGLGQLEAVTILLLLGLLQSGIR), serve as a signal peptide directing secretion. Residues 30-32 (ADG) constitute a propeptide, activation peptide. 2 disulfides stabilise this stretch: Cys-37-Cys-154 and Cys-70-Cys-86. The Peptidase S1 domain maps to 45–286 (ITGGGSAKPG…YASWIHHHVA (242 aa)). Catalysis depends on His-85, which acts as the Charge relay system. Asn-110 carries an N-linked (GlcNAc...) asparagine glycan. Catalysis depends on Asp-134, which acts as the Charge relay system. Asn-159 carries N-linked (GlcNAc...) asparagine glycosylation. 3 disulfide bridges follow: Cys-168–Cys-244, Cys-201–Cys-223, and Cys-234–Cys-262. Residue Ser-238 is the Charge relay system of the active site. A helical transmembrane segment spans residues 320–340 (LLRPVLFLPLGLTLGLLSLWL). A propeptide spanning residues 323 to 342 (PVLFLPLGLTLGLLSLWLEH) is cleaved from the precursor.

It belongs to the peptidase S1 family. In terms of assembly, heterodimer of two chains, light and heavy, held by a disulfide bond.

The protein resides in the cell membrane. It is found in the secreted. It localises to the extracellular space. In terms of biological role, possesses a trypsin-like cleavage specificity with a preference for poly-basic substrates. Stimulates epithelial sodium channel (ENaC) activity through activating cleavage of the gamma subunits (SCNN1G). The sequence is that of Prostasin (Prss8) from Mus musculus (Mouse).